We begin with the raw amino-acid sequence, 343 residues long: Phosphate acyltransferase (343 aa).

The protein belongs to the PlsX family. In terms of assembly, homodimer. Probably interacts with PlsY.

The protein localises to the cytoplasm. The catalysed reaction is a fatty acyl-[ACP] + phosphate = an acyl phosphate + holo-[ACP]. The protein operates within lipid metabolism; phospholipid metabolism. Functionally, catalyzes the reversible formation of acyl-phosphate (acyl-PO(4)) from acyl-[acyl-carrier-protein] (acyl-ACP). This enzyme utilizes acyl-ACP as fatty acyl donor, but not acyl-CoA. This chain is Phosphate acyltransferase, found in Neorickettsia sennetsu (strain ATCC VR-367 / Miyayama) (Ehrlichia sennetsu).